The following is a 427-amino-acid chain: 3-phosphoshikimate 1-carboxyvinyltransferase (427 aa).

3-phosphoshikimate is bound by residues Lys-22, Ser-23, and Arg-27. Lys-22 provides a ligand contact to phosphoenolpyruvate. Residues Gly-96 and Arg-124 each coordinate phosphoenolpyruvate. Ser-169, Ser-170, Gln-171, Ser-197, Asp-313, Asn-336, and Lys-340 together coordinate 3-phosphoshikimate. Gln-171 lines the phosphoenolpyruvate pocket. Catalysis depends on Asp-313, which acts as the Proton acceptor. Residues Arg-344, Arg-386, and Lys-411 each contribute to the phosphoenolpyruvate site.

The protein belongs to the EPSP synthase family. Monomer.

The protein localises to the cytoplasm. It catalyses the reaction 3-phosphoshikimate + phosphoenolpyruvate = 5-O-(1-carboxyvinyl)-3-phosphoshikimate + phosphate. The protein operates within metabolic intermediate biosynthesis; chorismate biosynthesis; chorismate from D-erythrose 4-phosphate and phosphoenolpyruvate: step 6/7. Its function is as follows. Catalyzes the transfer of the enolpyruvyl moiety of phosphoenolpyruvate (PEP) to the 5-hydroxyl of shikimate-3-phosphate (S3P) to produce enolpyruvyl shikimate-3-phosphate and inorganic phosphate. In Salmonella choleraesuis (strain SC-B67), this protein is 3-phosphoshikimate 1-carboxyvinyltransferase.